A 148-amino-acid chain; its full sequence is Large ribosomal subunit protein uL15 (148 aa).

A disordered region spans residues M1 to E51. Residues R21–S31 show a composition bias toward gly residues.

Belongs to the universal ribosomal protein uL15 family. In terms of assembly, part of the 50S ribosomal subunit.

Binds to the 23S rRNA. This is Large ribosomal subunit protein uL15 from Porphyromonas gingivalis (strain ATCC BAA-308 / W83).